The chain runs to 263 residues: MPVVTVYRHGGKGGVAPMNSSHIRTPRGDVQGWSPGAVRRNTQFLMCVREDKLTGAGFALTLTVRDCPATAQEWHKMRRAWEKRMLRAGMIRLHWVTEWQRRGVPHLHCAIWFSGTVYDFSLCIDAWLAVASSCGAALRGQHGRIIDGVVGWFQYVSKHAARGVRHYQRCSDNLPEAWKALTGRVWGKVGDWPLFSELRIDLQDHRQDGDGGFFAYRRLVRSWRVSDARRAGDRYRLRSARRMLTCSDTSRSRAIGFMEWGSL.

In Xylella fastidiosa (strain Temecula1 / ATCC 700964), this protein is Putative replication protein PDa0002.